Reading from the N-terminus, the 274-residue chain is uncharacterized protein (274 aa).

Position 104–111 (104–111 (GVFAIGKS)) interacts with ATP.

This is an uncharacterized protein from Mycoplasma genitalium (strain ATCC 33530 / DSM 19775 / NCTC 10195 / G37) (Mycoplasmoides genitalium).